Consider the following 151-residue polypeptide: Metallothiol transferase FosB (151 aa).

A VOC domain is found at 4-119 (SINHVTYSVS…DGHKFELHTG (116 aa)). Positions 7, 66, and 115 each coordinate Mg(2+). Glutamate 115 serves as the catalytic Proton donor/acceptor.

This sequence belongs to the fosfomycin resistance protein family. FosB subfamily. In terms of assembly, homodimer. Mg(2+) is required as a cofactor.

It localises to the cytoplasm. Functionally, metallothiol transferase which confers resistance to fosfomycin by catalyzing the addition of a thiol cofactor to fosfomycin. L-cysteine is probably the physiological thiol donor. This chain is Metallothiol transferase FosB, found in Staphylococcus saprophyticus subsp. saprophyticus (strain ATCC 15305 / DSM 20229 / NCIMB 8711 / NCTC 7292 / S-41).